The primary structure comprises 288 residues: ATP synthase gamma chain (288 aa).

This sequence belongs to the ATPase gamma chain family. In terms of assembly, F-type ATPases have 2 components, CF(1) - the catalytic core - and CF(0) - the membrane proton channel. CF(1) has five subunits: alpha(3), beta(3), gamma(1), delta(1), epsilon(1). CF(0) has three main subunits: a, b and c.

It localises to the cell inner membrane. In terms of biological role, produces ATP from ADP in the presence of a proton gradient across the membrane. The gamma chain is believed to be important in regulating ATPase activity and the flow of protons through the CF(0) complex. The chain is ATP synthase gamma chain from Vibrio parahaemolyticus serotype O3:K6 (strain RIMD 2210633).